A 310-amino-acid chain; its full sequence is p-hydroxybenzoic acid efflux pump subunit AaeA (310 aa).

A helical membrane pass occupies residues 12–32; sequence AITLVLVILAFIAIFRAWVYY.

This sequence belongs to the membrane fusion protein (MFP) (TC 8.A.1) family.

The protein resides in the cell inner membrane. In terms of biological role, forms an efflux pump with AaeB. In Escherichia fergusonii (strain ATCC 35469 / DSM 13698 / CCUG 18766 / IAM 14443 / JCM 21226 / LMG 7866 / NBRC 102419 / NCTC 12128 / CDC 0568-73), this protein is p-hydroxybenzoic acid efflux pump subunit AaeA.